Consider the following 280-residue polypeptide: Succinate dehydrogenase [ubiquinone] iron-sulfur subunit 2, mitochondrial (280 aa).

A mitochondrion-targeting transit peptide spans Met-1–Trp-28. The 2Fe-2S ferredoxin-type domain maps to Phe-51–Met-140. Positions 101, 106, and 121 each coordinate [2Fe-2S] cluster. Residues Asp-183–Tyr-213 form the 4Fe-4S ferredoxin-type domain. [4Fe-4S] cluster contacts are provided by Cys-193, Cys-196, and Cys-199. A [3Fe-4S] cluster-binding site is contributed by Cys-203. Trp-208 is an a ubiquinone binding site. The [3Fe-4S] cluster site is built by Cys-250 and Cys-256. Cys-260 provides a ligand contact to [4Fe-4S] cluster.

It belongs to the succinate dehydrogenase/fumarate reductase iron-sulfur protein family. Component of complex II composed of eight subunits in plants: four classical SDH subunits SDH1, SDH2, SDH3 and SDH4 (a flavoprotein (FP), an iron-sulfur protein (IP), and a cytochrome b composed of a large and a small subunit.), as well as four subunits unknown in mitochondria from bacteria and heterotrophic eukaryotes. [2Fe-2S] cluster serves as cofactor. [3Fe-4S] cluster is required as a cofactor. It depends on [4Fe-4S] cluster as a cofactor. As to expression, ubiquitous. Preferentially expressed in flowers, inflorescences and root tips.

Its subcellular location is the mitochondrion inner membrane. The enzyme catalyses a quinone + succinate = fumarate + a quinol. Its pathway is carbohydrate metabolism; tricarboxylic acid cycle; fumarate from succinate (eukaryal route): step 1/1. In terms of biological role, iron-sulfur protein (IP) subunit of succinate dehydrogenase (SDH) that is involved in complex II of the mitochondrial electron transport chain and is responsible for transferring electrons from succinate to ubiquinone (coenzyme Q). This chain is Succinate dehydrogenase [ubiquinone] iron-sulfur subunit 2, mitochondrial (SDH2-2), found in Arabidopsis thaliana (Mouse-ear cress).